A 98-amino-acid chain; its full sequence is Co-chaperonin GroES (98 aa).

This sequence belongs to the GroES chaperonin family. Heptamer of 7 subunits arranged in a ring. Interacts with the chaperonin GroEL.

The protein localises to the cytoplasm. Its function is as follows. Together with the chaperonin GroEL, plays an essential role in assisting protein folding. The GroEL-GroES system forms a nano-cage that allows encapsulation of the non-native substrate proteins and provides a physical environment optimized to promote and accelerate protein folding. GroES binds to the apical surface of the GroEL ring, thereby capping the opening of the GroEL channel. In Micrococcus luteus (strain ATCC 4698 / DSM 20030 / JCM 1464 / CCM 169 / CCUG 5858 / IAM 1056 / NBRC 3333 / NCIMB 9278 / NCTC 2665 / VKM Ac-2230) (Micrococcus lysodeikticus), this protein is Co-chaperonin GroES.